The following is an 87-amino-acid chain: Phytosulfokines 1 (87 aa).

Positions 1 to 24 are cleaved as a signal peptide; that stretch reads MMKTKSEVLIFFFTLVLLLSMASS. Residues 25 to 76 constitute a propeptide that is removed on maturation; sequence VILREDGFAPPKPSPTTHEKASTKGDRDGVECKNSDSEEECLVKKTVAAHTD. The interval 31–59 is disordered; it reads GFAPPKPSPTTHEKASTKGDRDGVECKNS. The segment covering 41–59 has biased composition (basic and acidic residues); the sequence is THEKASTKGDRDGVECKNS. Residues Y77 and Y79 each carry the sulfotyrosine modification. Residues 82 to 87 constitute a propeptide that is removed on maturation; that stretch reads DLNLSP.

Belongs to the phytosulfokine family. Sulfation is important for activity and for the binding to a putative membrane receptor. Post-translationally, PSK-beta is produced from PSK-alpha by exopeptidase digestion. In terms of tissue distribution, expressed only in roots.

It is found in the secreted. Its function is as follows. Promotes plant cell differentiation, organogenesis and somatic embryogenesis as well as cell proliferation. This is Phytosulfokines 1 (PSK1) from Arabidopsis thaliana (Mouse-ear cress).